The chain runs to 1355 residues: DNA-directed RNA polymerase subunit beta' (1355 aa).

The Zn(2+) site is built by C219, C293, C300, and C303. The disordered stretch occupies residues 1331–1355; that stretch reads AEVEVDDEVDDDYEDDDEDDDDYED.

The protein belongs to the RNA polymerase beta' chain family. RpoC2 subfamily. As to quaternary structure, in cyanobacteria the RNAP catalytic core is composed of 2 alpha, 1 beta, 1 beta', 1 gamma and 1 omega subunit. When a sigma factor is associated with the core the holoenzyme is formed, which can initiate transcription. Zn(2+) is required as a cofactor.

The enzyme catalyses RNA(n) + a ribonucleoside 5'-triphosphate = RNA(n+1) + diphosphate. DNA-dependent RNA polymerase catalyzes the transcription of DNA into RNA using the four ribonucleoside triphosphates as substrates. This chain is DNA-directed RNA polymerase subunit beta', found in Nostoc sp. (strain PCC 7120 / SAG 25.82 / UTEX 2576).